We begin with the raw amino-acid sequence, 322 residues long: Phosphatidylserine decarboxylase proenzyme (322 aa).

Active-site charge relay system; for autoendoproteolytic cleavage activity residues include Asp-90, His-147, and Ser-254. The active-site Schiff-base intermediate with substrate; via pyruvic acid; for decarboxylase activity is the Ser-254. Residue Ser-254 is modified to Pyruvic acid (Ser); by autocatalysis. The tract at residues 293-322 (PDAEPAPLPAEEIEAEHDASPLVDDKKDQV) is disordered. Residues 308–322 (EHDASPLVDDKKDQV) are compositionally biased toward basic and acidic residues.

Belongs to the phosphatidylserine decarboxylase family. PSD-B subfamily. Prokaryotic type I sub-subfamily. Heterodimer of a large membrane-associated beta subunit and a small pyruvoyl-containing alpha subunit. Pyruvate serves as cofactor. Is synthesized initially as an inactive proenzyme. Formation of the active enzyme involves a self-maturation process in which the active site pyruvoyl group is generated from an internal serine residue via an autocatalytic post-translational modification. Two non-identical subunits are generated from the proenzyme in this reaction, and the pyruvate is formed at the N-terminus of the alpha chain, which is derived from the carboxyl end of the proenzyme. The autoendoproteolytic cleavage occurs by a canonical serine protease mechanism, in which the side chain hydroxyl group of the serine supplies its oxygen atom to form the C-terminus of the beta chain, while the remainder of the serine residue undergoes an oxidative deamination to produce ammonia and the pyruvoyl prosthetic group on the alpha chain. During this reaction, the Ser that is part of the protease active site of the proenzyme becomes the pyruvoyl prosthetic group, which constitutes an essential element of the active site of the mature decarboxylase.

It localises to the cell membrane. It carries out the reaction a 1,2-diacyl-sn-glycero-3-phospho-L-serine + H(+) = a 1,2-diacyl-sn-glycero-3-phosphoethanolamine + CO2. The protein operates within phospholipid metabolism; phosphatidylethanolamine biosynthesis; phosphatidylethanolamine from CDP-diacylglycerol: step 2/2. Catalyzes the formation of phosphatidylethanolamine (PtdEtn) from phosphatidylserine (PtdSer). This is Phosphatidylserine decarboxylase proenzyme from Escherichia coli O45:K1 (strain S88 / ExPEC).